Consider the following 563-residue polypeptide: Adenine deaminase (563 aa).

The protein belongs to the metallo-dependent hydrolases superfamily. Adenine deaminase family. Mn(2+) is required as a cofactor.

The catalysed reaction is adenine + H2O + H(+) = hypoxanthine + NH4(+). The polypeptide is Adenine deaminase (Brucella anthropi (strain ATCC 49188 / DSM 6882 / CCUG 24695 / JCM 21032 / LMG 3331 / NBRC 15819 / NCTC 12168 / Alc 37) (Ochrobactrum anthropi)).